We begin with the raw amino-acid sequence, 825 residues long: Translation initiation factor IF-2 (825 aa).

Composition is skewed to basic and acidic residues over residues methionine 1 to lysine 19, arginine 35 to arginine 45, leucine 70 to lysine 98, and lysine 113 to alanine 122. The interval methionine 1–glutamate 239 is disordered. The segment covering proline 158–serine 169 has biased composition (low complexity). Residues glycine 181–arginine 191 are compositionally biased toward basic residues. The span at glutamine 194–arginine 208 shows a compositional bias: polar residues. Residues glutamine 211–glutamine 220 show a composition bias toward basic residues. One can recognise a tr-type G domain in the interval valine 326 to lysine 495. The segment at glycine 335–threonine 342 is G1. GTP is bound at residue glycine 335–threonine 342. A G2 region spans residues glycine 360–asparagine 364. Positions aspartate 381–glycine 384 are G3. Residues aspartate 381–histidine 385 and asparagine 435–aspartate 438 contribute to the GTP site. Residues asparagine 435–aspartate 438 form a G4 region. The interval serine 471 to lysine 473 is G5.

It belongs to the TRAFAC class translation factor GTPase superfamily. Classic translation factor GTPase family. IF-2 subfamily.

It is found in the cytoplasm. Its function is as follows. One of the essential components for the initiation of protein synthesis. Protects formylmethionyl-tRNA from spontaneous hydrolysis and promotes its binding to the 30S ribosomal subunits. Also involved in the hydrolysis of GTP during the formation of the 70S ribosomal complex. The chain is Translation initiation factor IF-2 from Lactobacillus delbrueckii subsp. bulgaricus (strain ATCC BAA-365 / Lb-18).